Reading from the N-terminus, the 376-residue chain is Carbamoyl phosphate synthase small chain (376 aa).

The CPSase stretch occupies residues 1 to 183 (MENILLNKAL…IYKKKYIEKN (183 aa)). L-glutamine-binding residues include serine 51, glycine 235, and glycine 237. Residues 187-374 (NIVAYDFGIK…INLVKDYRLN (188 aa)) form the Glutamine amidotransferase type-1 domain. The active-site Nucleophile is the cysteine 263. 4 residues coordinate L-glutamine: leucine 264, glutamine 267, asparagine 305, and phenylalanine 308. Active-site residues include histidine 347 and glutamate 349.

The protein belongs to the CarA family. As to quaternary structure, composed of two chains; the small (or glutamine) chain promotes the hydrolysis of glutamine to ammonia, which is used by the large (or ammonia) chain to synthesize carbamoyl phosphate. Tetramer of heterodimers (alpha,beta)4.

It carries out the reaction hydrogencarbonate + L-glutamine + 2 ATP + H2O = carbamoyl phosphate + L-glutamate + 2 ADP + phosphate + 2 H(+). It catalyses the reaction L-glutamine + H2O = L-glutamate + NH4(+). It participates in amino-acid biosynthesis; L-arginine biosynthesis; carbamoyl phosphate from bicarbonate: step 1/1. Its pathway is pyrimidine metabolism; UMP biosynthesis via de novo pathway; (S)-dihydroorotate from bicarbonate: step 1/3. In terms of biological role, small subunit of the glutamine-dependent carbamoyl phosphate synthetase (CPSase). CPSase catalyzes the formation of carbamoyl phosphate from the ammonia moiety of glutamine, carbonate, and phosphate donated by ATP, constituting the first step of 2 biosynthetic pathways, one leading to arginine and/or urea and the other to pyrimidine nucleotides. The small subunit (glutamine amidotransferase) binds and cleaves glutamine to supply the large subunit with the substrate ammonia. This chain is Carbamoyl phosphate synthase small chain, found in Wigglesworthia glossinidia brevipalpis.